The sequence spans 412 residues: Protein translocase subunit SecY (412 aa).

A run of 9 helical transmembrane segments spans residues 17–37 (IFLTIGLLVLSRLGTFIPVPG), 58–78 (IFSGGGFASIGIFALGIVPYI), 117–137 (ALGWAAIQSLGVSFWVRPYVF), 143–163 (FVVQMTLALTTGSMLIMWFSE), 170–190 (IGNGPSLLIFINIIAGLPKLI), 251–271 (VMPIIFASAILVLPAYLGQVI), 293–313 (YLIFYFSLILFFSYFYASLII), 350–370 (TFLGALFLAFIAVVPSIIENI), and 372–392 (SISTFKGLGATSLLILVGVAI).

The protein belongs to the SecY/SEC61-alpha family. As to quaternary structure, component of the plastid Sec protein translocase complex, which is composed of at least SecY and SecE.

Its subcellular location is the plastid. It is found in the chloroplast thylakoid membrane. In terms of biological role, the central subunit of the protein translocation channel SecYE. Consists of two halves formed by TMs 1-5 and 6-10. These two domains form a lateral gate at the front which open onto the bilayer between TMs 2 and 7, and are clamped together by SecE at the back. The channel is closed by both a pore ring composed of hydrophobic SecY resides and a short helix (helix 2A) on the extracellular side of the membrane which forms a plug. This chain is Protein translocase subunit SecY, found in Pyrenomonas salina.